The sequence spans 204 residues: Large ribosomal subunit protein bL25 (204 aa).

The protein belongs to the bacterial ribosomal protein bL25 family. CTC subfamily. As to quaternary structure, part of the 50S ribosomal subunit; part of the 5S rRNA/L5/L18/L25 subcomplex. Contacts the 5S rRNA. Binds to the 5S rRNA independently of L5 and L18.

Functionally, this is one of the proteins that binds to the 5S RNA in the ribosome where it forms part of the central protuberance. This chain is Large ribosomal subunit protein bL25, found in Pseudomonas aeruginosa (strain LESB58).